Here is a 307-residue protein sequence, read N- to C-terminus: Elongation factor Ts (307 aa).

Residues 79–82 are involved in Mg(2+) ion dislocation from EF-Tu; the sequence is TDFV.

This sequence belongs to the EF-Ts family.

It is found in the cytoplasm. In terms of biological role, associates with the EF-Tu.GDP complex and induces the exchange of GDP to GTP. It remains bound to the aminoacyl-tRNA.EF-Tu.GTP complex up to the GTP hydrolysis stage on the ribosome. This is Elongation factor Ts from Sinorhizobium fredii (strain NBRC 101917 / NGR234).